The following is a 63-amino-acid chain: Large ribosomal subunit protein uL29 (63 aa).

This sequence belongs to the universal ribosomal protein uL29 family.

The polypeptide is Large ribosomal subunit protein uL29 (Neisseria meningitidis serogroup C (strain 053442)).